The sequence spans 274 residues: Formamidopyrimidine-DNA glycosylase (274 aa).

The active-site Schiff-base intermediate with DNA is Pro2. The active-site Proton donor is the Glu3. The active-site Proton donor; for beta-elimination activity is the Lys56. DNA is bound by residues His89, Arg107, and Lys148. The FPG-type zinc finger occupies 233 to 267 (LAYGRAREMCVNCETTLENLKLGQRASVFCPQCQP). The active-site Proton donor; for delta-elimination activity is the Arg257.

The protein belongs to the FPG family. Monomer. It depends on Zn(2+) as a cofactor.

The catalysed reaction is Hydrolysis of DNA containing ring-opened 7-methylguanine residues, releasing 2,6-diamino-4-hydroxy-5-(N-methyl)formamidopyrimidine.. The enzyme catalyses 2'-deoxyribonucleotide-(2'-deoxyribose 5'-phosphate)-2'-deoxyribonucleotide-DNA = a 3'-end 2'-deoxyribonucleotide-(2,3-dehydro-2,3-deoxyribose 5'-phosphate)-DNA + a 5'-end 5'-phospho-2'-deoxyribonucleoside-DNA + H(+). Functionally, involved in base excision repair of DNA damaged by oxidation or by mutagenic agents. Acts as a DNA glycosylase that recognizes and removes damaged bases. Has a preference for oxidized purines, such as 7,8-dihydro-8-oxoguanine (8-oxoG). Has AP (apurinic/apyrimidinic) lyase activity and introduces nicks in the DNA strand. Cleaves the DNA backbone by beta-delta elimination to generate a single-strand break at the site of the removed base with both 3'- and 5'-phosphates. The sequence is that of Formamidopyrimidine-DNA glycosylase from Acinetobacter baumannii (strain SDF).